A 317-amino-acid chain; its full sequence is Olfactory receptor 10AD1 (317 aa).

Topologically, residues 1 to 25 (MLRNGSIVTEFILVGFQQSSTSTRA) are extracellular. Asn4 is a glycosylation site (N-linked (GlcNAc...) asparagine). A helical membrane pass occupies residues 26–46 (LLFALFLALYSLTMAMNGLII). The Cytoplasmic segment spans residues 47 to 55 (FITSWTDPK). Residues 56-76 (LNSPMYFFLGHLSLLDVCFIT) form a helical membrane-spanning segment. At 77–100 (TTIPQMLIHLVVRDHIVSFVCCMT) the chain is on the extracellular side. Cys98 and Cys190 are joined by a disulfide. A helical membrane pass occupies residues 101–121 (QMYFVFCVGVAECILLAFMAY). Residues 122–140 (DRYVAICYPLNYVPIISQK) are Cytoplasmic-facing. Residues 141–161 (VCVRLVGTAWFFGLINGIFLE) traverse the membrane as a helical segment. At 162 to 198 (YISFREPFRRDNHIESFFCEAPIVIGLSCGDPQFSLW) the chain is on the extracellular side. A helical membrane pass occupies residues 199–218 (AIFADAIVVILSPMVLTVTS). Over 219-238 (YVHILATILSKASSSGRGKT) the chain is Cytoplasmic. The chain crosses the membrane as a helical span at residues 239–259 (FSTCASHLTVVIFLYTSAMFS). The Extracellular segment spans residues 260–272 (YMNPHSTHGPDKD). Residues 273-293 (KPFSLLYTIITPMCNPIIYSF) traverse the membrane as a helical segment. Over 294–317 (RNKEIKEAMVRALGRTRLAQPQSV) the chain is Cytoplasmic.

Belongs to the G-protein coupled receptor 1 family.

It localises to the cell membrane. Odorant receptor. The chain is Olfactory receptor 10AD1 (OR10AD1) from Homo sapiens (Human).